The primary structure comprises 466 residues: MRSSAALALLLCAGQVFALPVNSPMTKGDTKVMKCVLEVISDSLSKPSPMPVSPECLETLQGDERVLSILRHQNLLKELQDLALQGAKERAQQQQQQQQQQQQQQQQQQQQHSSFEDELSEVFENQSPAAKHGDAASEAPSKDTVEKREDSDKGQQDAFEGTTEGPRPQAFPEPKQESSMMGNSQSPGEDTANNTQSPTSLPSQEHGIPQTTEGSERGPSAQQQARKAKQEEKEEEEEEKEEEEEEKEEKAIAREKAGPKEVPTAASSSHFYSGYKKIQKDDDGQSESQAVNGKTGASEAVPSEGKGELEHSQQEEDGEEAMAGPPQGLFPGGKGQELERKQQEEEEEEERLSREWEDKRWSRMDQLAKELTAEKRLEGEDDPDRSMKLSFRARAYGFRDPGPQLRRGWRPSSREDSVEARGDFEEKKEEEGSANRRAEDQELESLSAIEAELEKVAHQLQALRRG.

An N-terminal signal peptide occupies residues 1-18; that stretch reads MRSSAALALLLCAGQVFA. An intrachain disulfide couples cysteine 35 to cysteine 56. Positions 91–443 are disordered; that stretch reads AQQQQQQQQQ…ANRRAEDQEL (353 aa). Residues 92–111 are compositionally biased toward low complexity; that stretch reads QQQQQQQQQQQQQQQQQQQQ. A Phosphoserine modification is found at serine 114. Basic and acidic residues predominate over residues 131–155; it reads KHGDAASEAPSKDTVEKREDSDKGQ. Over residues 177 to 213 the composition is skewed to polar residues; that stretch reads ESSMMGNSQSPGEDTANNTQSPTSLPSQEHGIPQTTE. Position 215 is a phosphoserine (serine 215). Over residues 233–247 the composition is skewed to acidic residues; sequence KEEEEEEKEEEEEEK. Residues 248 to 259 are compositionally biased toward basic and acidic residues; sequence EEKAIAREKAGP. 2 positions are modified to phosphoserine: serine 288 and serine 312. Positions 305-314 are enriched in basic and acidic residues; sequence GKGELEHSQQ. Glycine 332 carries the glycine amide modification. Residues 351–378 are compositionally biased toward basic and acidic residues; it reads RLSREWEDKRWSRMDQLAKELTAEKRLE. Residues serine 353 and serine 386 each carry the phosphoserine modification. Position 387 is a methionine sulfoxide (methionine 387). The span at 412-440 shows a compositional bias: basic and acidic residues; the sequence is SSREDSVEARGDFEEKKEEEGSANRRAED. Phosphoserine occurs at positions 413, 417, and 433. Serine 433 is a glycosylation site (O-linked (Xyl...) (chondroitin sulfate) serine). Glutamine 441 carries the post-translational modification Pyrrolidone carboxylic acid. Phosphoserine is present on serine 447.

This sequence belongs to the chromogranin/secretogranin protein family. In terms of assembly, self-interacts; self-assembly is promoted in vitro by chondroitin sulfate attachment which occurs at mildly acidic pH conditions. Interacts with SCG3; this interaction is optimal in conditions mimicking the lumenal milieu of the trans-Golgi network, i.e. pH 5.5 and 10 mM Ca(+2). Interacts with ITPR1 in the secretory granules. O-glycosylated; contains chondroitin sulfate (CS). CS attachment is pH-dependent, being observed at mildly acidic conditions of pH 5 but not at neutral pH, and promotes self-assembly in vitro. Expressed in the brain and adrenal and pituitary glands.

It is found in the cytoplasmic vesicle. It localises to the secretory vesicle. The protein resides in the neuronal dense core vesicle. Its subcellular location is the secreted. Strongly inhibits glucose induced insulin release from the pancreas. In terms of biological role, catestatin inhibits catecholamine release from chromaffin cells and noradrenergic neurons by acting as a non-competitive nicotinic cholinergic antagonist. Can induce mast cell migration, degranulation and production of cytokines and chemokines. Its function is as follows. Serpinin regulates granule biogenesis in endocrine cells by up-regulating the transcription of protease nexin 1 (SERPINE2) via a cAMP-PKA-SP1 pathway. This leads to inhibition of granule protein degradation in the Golgi complex which in turn promotes granule formation. Serpinin and pGlu-serpinin can enhance both myocardial contractility (inotropy) and relaxation (lusitropy) and this cardio-stimulation requires a beta 1-adrenergic receptor/adenylate cyclase/cAMP/PKA pathway. The sequence is that of Chromogranin-A (Chga) from Rattus norvegicus (Rat).